The sequence spans 175 residues: MARKNQKAPWEPEEEIIWVSKSEMKRDMEELQKLGEELVGLKPAVLEKFPLSEDLREAIADAQRFKNEARRRQLQRIGKLMRYEDPEPIQAALDKVRNKHSQATAALHKLEMLRDRVVEEGDKAIDDVMELYPEADRQRLRQLARQAAKEKKAGKPAKSYREIFQILKALNEEEI.

Belongs to the DarP family.

The protein localises to the cytoplasm. Functionally, member of a network of 50S ribosomal subunit biogenesis factors which assembles along the 30S-50S interface, preventing incorrect 23S rRNA structures from forming. Promotes peptidyl transferase center (PTC) maturation. The sequence is that of Dual-action ribosomal maturation protein DarP from Vibrio parahaemolyticus serotype O3:K6 (strain RIMD 2210633).